A 114-amino-acid polypeptide reads, in one-letter code: Small ribosomal subunit protein bS6 (114 aa).

Belongs to the bacterial ribosomal protein bS6 family.

Its function is as follows. Binds together with bS18 to 16S ribosomal RNA. This is Small ribosomal subunit protein bS6 from Hydrogenovibrio crunogenus (strain DSM 25203 / XCL-2) (Thiomicrospira crunogena).